Consider the following 929-residue polypeptide: Leucine--tRNA ligase (929 aa).

The short motif at 42–52 (PYPSGNLHMGH) is the 'HIGH' region element. A 'KMSKS' region motif is present at residues 614–618 (KMSKS). Residue Lys617 coordinates ATP.

It belongs to the class-I aminoacyl-tRNA synthetase family.

It localises to the cytoplasm. The enzyme catalyses tRNA(Leu) + L-leucine + ATP = L-leucyl-tRNA(Leu) + AMP + diphosphate. The sequence is that of Leucine--tRNA ligase from Trichodesmium erythraeum (strain IMS101).